A 775-amino-acid polypeptide reads, in one-letter code: Acetamidase regulatory protein (775 aa).

Positions 1-15 (MSSTAHNSQPSTGNG) are enriched in polar residues. The disordered stretch occupies residues 1-20 (MSSTAHNSQPSTGNGVTKRK). The segment at residues 26–59 (CIHCHRRKVRCDARIVGLPCSNCRSAGKADCRIH) is a DNA-binding region (zn(2)-C6 fungal-type). The span at 126 to 153 (PHSSYTNGNHLSNNRGSQPITETQTFTR) shows a compositional bias: polar residues. Disordered stretches follow at residues 126–159 (PHSSYTNGNHLSNNRGSQPITETQTFTRQPGADR) and 630–699 (ATSE…HQNQ). Residues 630-644 (ATSERPRRFSTHDQN) are compositionally biased toward basic and acidic residues. The span at 674 to 689 (PRPPYEVPTPESPRMP) shows a compositional bias: pro residues.

Its subcellular location is the nucleus. Positively regulates the expression of genes involved in the catabolism of certain amides, omega amino acids, and lactams. This chain is Acetamidase regulatory protein (amdR), found in Aspergillus oryzae (strain ATCC 42149 / RIB 40) (Yellow koji mold).